A 298-amino-acid polypeptide reads, in one-letter code: Probable alpha-L-glutamate ligase (298 aa).

An ATP-grasp domain is found at 108–290 (LQLLLKTGVP…IAAEIIDYIE (183 aa)). ATP is bound by residues Lys-144, 181-182 (DF), Asp-190, and 214-216 (RAN). Residues Asp-251, Glu-263, and Asn-265 each contribute to the Mg(2+) site. Residues Asp-251, Glu-263, and Asn-265 each coordinate Mn(2+).

This sequence belongs to the RimK family. Requires Mg(2+) as cofactor. Mn(2+) is required as a cofactor.

This chain is Probable alpha-L-glutamate ligase, found in Haemophilus influenzae (strain PittEE).